A 160-amino-acid polypeptide reads, in one-letter code: GPI-anchored protein LLG3 (160 aa).

The first 23 residues, 1-23 (MKITHHCLVSLLSILLLSGFAFS), serve as a signal peptide directing secretion. A glycan (N-linked (GlcNAc...) asparagine) is linked at Asn56. The GPI-anchor amidated serine moiety is linked to residue Ser137. Positions 138–160 (HASIPLVSTHVLLITVSILFHLF) are cleaved as a propeptide — removed in mature form.

In terms of tissue distribution, expressed in pollen, pollen tubes, sporophytic pistil tissues, in the early stages of female gametophyte development, and in unfertilized, mature ovules.

The protein resides in the cell membrane. This chain is GPI-anchored protein LLG3, found in Arabidopsis thaliana (Mouse-ear cress).